Here is a 255-residue protein sequence, read N- to C-terminus: Postacrosomal sheath WW domain-binding protein (255 aa).

A GRAM domain is found at 15-87 (LIPNGESLLK…DLITNLTVEQ (73 aa)). A run of 7 repeats spans residues 139-145 (YGAPPAG), 146-152 (YGAPPAG), 153-159 (YGAPPPG), 160-166 (YGAPPAG), 167-173 (YGAPPPG), 174-180 (YGAPPAG), and 202-208 (YGAPPLG). Positions 139–208 (YGAPPAGYGA…PAGYGAPPLG (70 aa)) are 6 X 7 AA tandem repeat of Y-G-X-P-P-X-G. The PPxY motif signature appears at 171-174 (PPGY). 2 disordered regions span residues 180–199 (GYGA…RASP) and 204–255 (APPL…ASSS).

Its function is as follows. May play a role in meiotic resumption and pronuclear formation, mediated by a WW domain-signaling pathway during fertilization. This Macaca fascicularis (Crab-eating macaque) protein is Postacrosomal sheath WW domain-binding protein (WBP2NL).